A 255-amino-acid chain; its full sequence is 5'-nucleotidase SurE (255 aa).

Residues Asp8, Asp9, Ser40, and Asn93 each coordinate a divalent metal cation.

Belongs to the SurE nucleotidase family. A divalent metal cation is required as a cofactor.

The protein resides in the cytoplasm. The catalysed reaction is a ribonucleoside 5'-phosphate + H2O = a ribonucleoside + phosphate. In terms of biological role, nucleotidase that shows phosphatase activity on nucleoside 5'-monophosphates. The sequence is that of 5'-nucleotidase SurE from Nitrobacter hamburgensis (strain DSM 10229 / NCIMB 13809 / X14).